We begin with the raw amino-acid sequence, 361 residues long: Phospho-N-acetylmuramoyl-pentapeptide-transferase (361 aa).

10 helical membrane passes run 27-47 (ILAS…MIRW), 70-90 (GTPT…CLLW), 97-117 (SLWL…VDDY), 134-154 (YFWQ…NASL), 167-187 (TVTW…IVGS), 199-219 (GLAI…AYAS), 236-256 (TGEL…FLWY), 263-283 (VFMG…VAVV), 288-308 (LVLL…ILQV), and 338-358 (KVIV…LATL).

Belongs to the glycosyltransferase 4 family. MraY subfamily. Mg(2+) is required as a cofactor.

It localises to the cell inner membrane. It carries out the reaction UDP-N-acetyl-alpha-D-muramoyl-L-alanyl-gamma-D-glutamyl-meso-2,6-diaminopimeloyl-D-alanyl-D-alanine + di-trans,octa-cis-undecaprenyl phosphate = di-trans,octa-cis-undecaprenyl diphospho-N-acetyl-alpha-D-muramoyl-L-alanyl-D-glutamyl-meso-2,6-diaminopimeloyl-D-alanyl-D-alanine + UMP. The protein operates within cell wall biogenesis; peptidoglycan biosynthesis. In terms of biological role, catalyzes the initial step of the lipid cycle reactions in the biosynthesis of the cell wall peptidoglycan: transfers peptidoglycan precursor phospho-MurNAc-pentapeptide from UDP-MurNAc-pentapeptide onto the lipid carrier undecaprenyl phosphate, yielding undecaprenyl-pyrophosphoryl-MurNAc-pentapeptide, known as lipid I. This is Phospho-N-acetylmuramoyl-pentapeptide-transferase from Legionella pneumophila subsp. pneumophila (strain Philadelphia 1 / ATCC 33152 / DSM 7513).